The sequence spans 316 residues: SWR complex protein 2 (316 aa).

Disordered regions lie at residues Met1–Val81, Lys93–Tyr127, and Glu153–Gln180. The span at Lys20 to Arg31 shows a compositional bias: basic and acidic residues. Residues Lys20 to Lys95 are a coiled coil. Acidic residues predominate over residues Glu40–Arg56. 2 positions are modified to phosphoserine: Ser64 and Ser65. A compositionally biased stretch (basic and acidic residues) spans Glu70–Val81. Positions Val167 to Gln180 are enriched in polar residues.

This sequence belongs to the VPS72/YL1 family. Component of the SWR1 chromatin-remodeling complex.

It localises to the nucleus. Participates in the catalytic exchange of histone H2A for the H2A variant pht1, an euchromatin-specific factor, leading to chromatin remodeling and changes in transcription of targeted genes. The sequence is that of SWR complex protein 2 (swc2) from Schizosaccharomyces pombe (strain 972 / ATCC 24843) (Fission yeast).